The chain runs to 351 residues: MEQAIINDEREYLRHFWHPVCTVTELEKAHPSSLGPLAVKLLNEQLVVAKLGDEYVAMRDRCAHRSAKLSLGTVSGNRLQCPYHGWQYDTHGACQLVPACPNSPIPNKAKVDRFDCEERYGLIWIRLDSSFDCTEIPYFSAANDPRLRIVIQEPYWWDATAERRWENFTDFSHFAFIHPGTLFDPNNAEPPIVPMDRFNGQFRFVYDTPEDMAVPNQAPIGSFSYTCSMPFAINLEVSKYSSSSLHVLFNVSCPVDSHTTKNFLIFAREQSDDSDYLHIAFNDLVFAEDKPVIESQWPKDAPADEVSVVADKVSIQYRKWLRELKEAHKEGSQAFRSALLDPVIESDRSYI.

A Rieske domain is found at 17 to 125 (WHPVCTVTEL…CEERYGLIWI (109 aa)). [2Fe-2S] cluster-binding residues include cysteine 62, histidine 64, cysteine 81, and histidine 84.

It depends on [2Fe-2S] cluster as a cofactor.

It carries out the reaction caffeine + NADH + O2 + H(+) = theobromine + formaldehyde + NAD(+) + H2O. The enzyme catalyses caffeine + NADPH + O2 + H(+) = theobromine + formaldehyde + NADP(+) + H2O. It catalyses the reaction theophylline + NADH + O2 + H(+) = 3-methylxanthine + formaldehyde + NAD(+) + H2O. The catalysed reaction is theophylline + NADPH + O2 + H(+) = 3-methylxanthine + formaldehyde + NADP(+) + H2O. It carries out the reaction 1,7-dimethylxanthine + NADH + O2 + H(+) = 7-methylxanthine + formaldehyde + NAD(+) + H2O. The enzyme catalyses 1,7-dimethylxanthine + NADPH + O2 + H(+) = 7-methylxanthine + formaldehyde + NADP(+) + H2O. Its pathway is alkaloid degradation. Functionally, involved in the caffeine degradation, which is the essential first step for assimilating the carbon and nitrogen in caffeine. Catalyzes the N1-demethylation of caffeine to produce theobromine and formaldehyde. Also catalyzes the N1-demethylation of theophylline, paraxanthine, and 1-methylxanthine to 3-methylxanthine, 7-methylxanthine, and xanthine, respectively. NADH is the preferred substrate. In Pseudomonas putida (Arthrobacter siderocapsulatus), this protein is Methylxanthine N1-demethylase NdmA (ndmA).